A 339-amino-acid polypeptide reads, in one-letter code: UDP-N-acetylenolpyruvoylglucosamine reductase (339 aa).

The FAD-binding PCMH-type domain occupies 18-189 (GIDVKARYFS…LRVRFALTRT (172 aa)). Residue Arg-166 is part of the active site. Ser-239 serves as the catalytic Proton donor. Glu-335 is a catalytic residue.

It belongs to the MurB family. FAD is required as a cofactor.

The protein resides in the cytoplasm. The enzyme catalyses UDP-N-acetyl-alpha-D-muramate + NADP(+) = UDP-N-acetyl-3-O-(1-carboxyvinyl)-alpha-D-glucosamine + NADPH + H(+). Its pathway is cell wall biogenesis; peptidoglycan biosynthesis. Functionally, cell wall formation. The polypeptide is UDP-N-acetylenolpyruvoylglucosamine reductase (Pseudomonas putida (strain ATCC 47054 / DSM 6125 / CFBP 8728 / NCIMB 11950 / KT2440)).